The chain runs to 454 residues: Guanine deaminase (454 aa).

Residues H82 and H84 each coordinate Zn(2+). Substrate contacts are provided by residues 84–87, 213–214, 240–243, and D330; these read HASQ, RF, and HISE. Zn(2+)-binding residues include H240 and D330. At S453 the chain carries Phosphoserine.

It belongs to the metallo-dependent hydrolases superfamily. ATZ/TRZ family. In terms of assembly, homodimer. It depends on Zn(2+) as a cofactor.

It carries out the reaction guanine + H2O + H(+) = xanthine + NH4(+). It participates in purine metabolism; guanine degradation; xanthine from guanine: step 1/1. Its function is as follows. Catalyzes the hydrolytic deamination of guanine, producing xanthine and ammonia. The polypeptide is Guanine deaminase (Homo sapiens (Human)).